The primary structure comprises 211 residues: MRNIQIALTKGRLEKHVIPLFEQIGIDCSELKNKGRKLVFQSKNTDISFILVKAVDVATYVEHGVADIGVVGKDILMENEKDIYEMLDLGVGVCKFCVASIPTYNPKSYRKKCIATKYPHITSNYFHNKGEDVEIIKIEGSVEIAPILGLADAIVDIVETGKTLQENGLIVFEEMYSISARMIVNKAALKTKKDEIFSIVNMMEQEILSGK.

This sequence belongs to the ATP phosphoribosyltransferase family. Short subfamily. Heteromultimer composed of HisG and HisZ subunits.

The protein resides in the cytoplasm. It carries out the reaction 1-(5-phospho-beta-D-ribosyl)-ATP + diphosphate = 5-phospho-alpha-D-ribose 1-diphosphate + ATP. It participates in amino-acid biosynthesis; L-histidine biosynthesis; L-histidine from 5-phospho-alpha-D-ribose 1-diphosphate: step 1/9. Its function is as follows. Catalyzes the condensation of ATP and 5-phosphoribose 1-diphosphate to form N'-(5'-phosphoribosyl)-ATP (PR-ATP). Has a crucial role in the pathway because the rate of histidine biosynthesis seems to be controlled primarily by regulation of HisG enzymatic activity. This is ATP phosphoribosyltransferase from Bacillus thuringiensis subsp. konkukian (strain 97-27).